Consider the following 613-residue polypeptide: Protein translocase subunit SecD (613 aa).

6 helical membrane passes run 10 to 30, 452 to 472, 477 to 497, 503 to 523, 548 to 568, and 576 to 596; these read ALVVAVAILSIYQLVPSWFYF, KGTLAALVGLALVVVFMVVYY, LVADVALALNGLLVLAVMSMI, LPGIAGFVLTLGMAVDANVLI, VFWTIVDSHVTTLVAGVVLFQ, and GFAVTLIIGLVASMFTSIVVT.

Belongs to the SecD/SecF family. SecD subfamily. Forms a complex with SecF. Part of the essential Sec protein translocation apparatus which comprises SecA, SecYEG and auxiliary proteins SecDF-YajC and YidC.

The protein resides in the cell inner membrane. Its function is as follows. Part of the Sec protein translocase complex. Interacts with the SecYEG preprotein conducting channel. SecDF uses the proton motive force (PMF) to complete protein translocation after the ATP-dependent function of SecA. The chain is Protein translocase subunit SecD from Anaeromyxobacter dehalogenans (strain 2CP-C).